Consider the following 287-residue polypeptide: 2-dehydro-3-deoxyphosphooctonate aldolase (287 aa).

It belongs to the KdsA family.

It localises to the cytoplasm. It catalyses the reaction D-arabinose 5-phosphate + phosphoenolpyruvate + H2O = 3-deoxy-alpha-D-manno-2-octulosonate-8-phosphate + phosphate. The protein operates within carbohydrate biosynthesis; 3-deoxy-D-manno-octulosonate biosynthesis; 3-deoxy-D-manno-octulosonate from D-ribulose 5-phosphate: step 2/3. It participates in bacterial outer membrane biogenesis; lipopolysaccharide biosynthesis. The polypeptide is 2-dehydro-3-deoxyphosphooctonate aldolase (Caulobacter vibrioides (strain ATCC 19089 / CIP 103742 / CB 15) (Caulobacter crescentus)).